The chain runs to 382 residues: tRNA (guanine-N(7)-)-methyltransferase non-catalytic subunit wuho (382 aa).

Residues 40-59 form a disordered region; the sequence is VKDTDAGNEPNGNQTQPTPA. Residues 49–59 are compositionally biased toward polar residues; the sequence is PNGNQTQPTPA. 2 WD repeats span residues 149–190 and 192–230; these read GHMS…ECFC and GHTE…ELSK.

This sequence belongs to the WD repeat TRM82 family. As to quaternary structure, forms a heterodimer with the catalytic subunit.

It localises to the nucleus. It participates in tRNA modification; N(7)-methylguanine-tRNA biosynthesis. Its function is as follows. Required for the formation of N(7)-methylguanine at position 46 (m7G46) in tRNA. In the complex, it is required to stabilize and induce conformational changes of the catalytic subunit. The polypeptide is tRNA (guanine-N(7)-)-methyltransferase non-catalytic subunit wuho (Anopheles gambiae (African malaria mosquito)).